The sequence spans 582 residues: Protein alan shepard (582 aa).

Over residues 1 to 12 the composition is skewed to pro residues; that stretch reads MHPRYSPAPPPQ. The segment at 1-73 is disordered; it reads MHPRYSPAPP…AAPPTSRSAF (73 aa). At Tyr-5 the chain carries Phosphotyrosine. Low complexity predominate over residues 13-24; it reads QQQQMGGPLHQQ. Over residues 25 to 36 the composition is skewed to gly residues; sequence QGGGGGGGGGIR. Residues 39–57 are compositionally biased toward polar residues; sequence SNAQQLPPQIPRSQNYSNG. A compositionally biased stretch (low complexity) spans 58–72; sequence SSSSAAAAPPTSRSA. Tyr-125 and Tyr-142 each carry phosphotyrosine. The interval 164–225 is disordered; it reads PATTTYGQRV…TVQNQNQQGG (62 aa). Over residues 178-225 the composition is skewed to low complexity; the sequence is SPSNTNSSSSSNTGSQSGTLSTSLSNTTNTNTNMGPNGTVQNQNQQGG. 2 consecutive RRM domains span residues 231–304 and 310–389; these read TNLY…MAKQ and TNLY…FADG. Residues 555 to 582 are disordered; sequence PMTDSEQASTAASPDEAYTQYPHQAAPK.

Functionally, has a role in the perception of gravity. This chain is Protein alan shepard, found in Drosophila yakuba (Fruit fly).